Here is a 374-residue protein sequence, read N- to C-terminus: Histidinol-phosphate aminotransferase 2 (374 aa).

Lysine 227 carries the post-translational modification N6-(pyridoxal phosphate)lysine.

The protein belongs to the class-II pyridoxal-phosphate-dependent aminotransferase family. Histidinol-phosphate aminotransferase subfamily. Homodimer. Requires pyridoxal 5'-phosphate as cofactor.

The catalysed reaction is L-histidinol phosphate + 2-oxoglutarate = 3-(imidazol-4-yl)-2-oxopropyl phosphate + L-glutamate. It functions in the pathway amino-acid biosynthesis; L-histidine biosynthesis; L-histidine from 5-phospho-alpha-D-ribose 1-diphosphate: step 7/9. The protein is Histidinol-phosphate aminotransferase 2 (hisC2) of Ralstonia nicotianae (strain ATCC BAA-1114 / GMI1000) (Ralstonia solanacearum).